The primary structure comprises 1286 residues: Protein patched (1286 aa).

Residues 1–76 (MDRDSLPRVP…GSSVQKHAGK (76 aa)) are Cytoplasmic-facing. The chain crosses the membrane as a helical span at residues 77–92 (VLFVAILVLSTFCVGL). The Extracellular segment spans residues 93–427 (KSAQIHSKVH…DDILAKFSHP (335 aa)). 4 N-linked (GlcNAc...) asparagine glycosylation sites follow: asparagine 142, asparagine 298, asparagine 335, and asparagine 388. A helical transmembrane segment spans residues 428-448 (SALSIVIGVAVTVLYAFCTLL). An SSD domain is found at 428–583 (SALSIVIGVA…LLVFPAMISL (156 aa)). The Cytoplasmic segment spans residues 449 to 465 (RWRDPVRGQSSVGVAGV). A helical transmembrane segment spans residues 466-486 (LLMCFSTAAGLGLSALLGIVF). Residues 487–492 (NAASTQ) lie on the Extracellular side of the membrane. A helical membrane pass occupies residues 493–511 (VVPFLALGLGVDHIFMLTA). Residues 512-532 (AYAESNRREQTKLILKKVGPS) are Cytoplasmic-facing. Residues 533–553 (ILFSACSTAGSFFAAAFIPVP) form a helical membrane-spanning segment. Over 554 to 562 (ALKVFCLQA) the chain is Extracellular. The helical transmembrane segment at 563-583 (AIVMCSNLAAALLVFPAMISL) threads the bilayer. Residues 584-677 (DLRRRTAGRA…QHYTPFLMRS (94 aa)) lie on the Cytoplasmic side of the membrane. A helical membrane pass occupies residues 678 to 699 (WVKFLTVMGFLAALISSLYAST). At 700–931 (RLQDGLDIID…IRDLSVKYEG (232 aa)) the chain is on the extracellular side. A glycan (N-linked (GlcNAc...) asparagine) is linked at asparagine 807. Residues 932–952 (FGLPNYPSGIPFIFWEQYMTL) form a helical membrane-spanning segment. The Cytoplasmic portion of the chain corresponds to 953–955 (RSS). Residues 956-976 (LAMILACVLLAALVLVSLLLL) form a helical membrane-spanning segment. Topologically, residues 977–1007 (SVWAAVLVILSVLASLAQIFGAMTLLGIKLS) are extracellular. A helical transmembrane segment spans residues 1008–1028 (AIPAVILILSVGMMLCFNVLI). At 1029–1056 (SLGFMTSVGNRQRRVQLSMQMSLGPLVH) the chain is on the cytoplasmic side. Residues 1057-1077 (GMLTSGVAVFMLSTSPFEFVI) traverse the membrane as a helical segment. Residues 1078–1082 (RHFCW) are Extracellular-facing. A helical transmembrane segment spans residues 1083–1103 (LLLVVLCVGACNSLLVFPILL). The Cytoplasmic portion of the chain corresponds to 1104 to 1286 (SMVGPEAELV…RAVRSYNFTS (183 aa)). The tract at residues 1116–1237 (EHPDRISTPS…PPPFPTAYPP (122 aa)) is disordered. Polar residues-rich tracts occupy residues 1141–1152 (VQGSRSSRGSCQ) and 1165–1191 (PSLT…NDWT). The segment covering 1199–1216 (PASYAAPPPAYHKAAAQQ) has biased composition (low complexity). Positions 1224 to 1235 (PTTPPPPFPTAY) are enriched in pro residues.

Belongs to the patched family. Interacts (via C-terminal cytoplasmic region) with CG5504/l(2)tid; the interaction is probably direct. Interacts with hh/hedgehog.

It is found in the membrane. Segmentation polarity protein. Acts as a receptor for the hedgehog protein (hh). Associates with the smoothened protein (SMO) to transduce the hedgehog signal leading to the activation of wingless, decapentaplegic and patched itself. Participates in cell interactions that establish pattern within the segment and the imaginal disks during development. In the absence of HH, represses the constitutive signaling activity of smo through fused (FU). The sequence is that of Protein patched from Drosophila melanogaster (Fruit fly).